We begin with the raw amino-acid sequence, 241 residues long: Uridylate kinase (241 aa).

ATP is bound at residue 14–17 (KASG). The involved in allosteric activation by GTP stretch occupies residues 22–27 (GDQGFG). Position 56 (glycine 56) interacts with UMP. ATP-binding residues include glycine 57 and arginine 61. UMP is bound by residues aspartate 76 and 137–144 (TGNPFFTT). Residues threonine 164, glutamine 165, tyrosine 170, and aspartate 173 each coordinate ATP.

This sequence belongs to the UMP kinase family. As to quaternary structure, homohexamer.

It is found in the cytoplasm. It catalyses the reaction UMP + ATP = UDP + ADP. The protein operates within pyrimidine metabolism; CTP biosynthesis via de novo pathway; UDP from UMP (UMPK route): step 1/1. With respect to regulation, allosterically activated by GTP. Inhibited by UTP. Catalyzes the reversible phosphorylation of UMP to UDP. This Agrobacterium fabrum (strain C58 / ATCC 33970) (Agrobacterium tumefaciens (strain C58)) protein is Uridylate kinase.